The following is a 91-amino-acid chain: Probable Fe(2+)-trafficking protein (91 aa).

Belongs to the Fe(2+)-trafficking protein family.

In terms of biological role, could be a mediator in iron transactions between iron acquisition and iron-requiring processes, such as synthesis and/or repair of Fe-S clusters in biosynthetic enzymes. The chain is Probable Fe(2+)-trafficking protein from Paraburkholderia phymatum (strain DSM 17167 / CIP 108236 / LMG 21445 / STM815) (Burkholderia phymatum).